The primary structure comprises 307 residues: 4-hydroxythreonine-4-phosphate dehydrogenase (307 aa).

The substrate site is built by His126 and Thr127. A divalent metal cation contacts are provided by His156, His195, and His251. Residues Lys259, Asn268, and Arg277 each coordinate substrate.

This sequence belongs to the PdxA family. Homodimer. Zn(2+) is required as a cofactor. Requires Mg(2+) as cofactor. Co(2+) serves as cofactor.

The protein localises to the cytoplasm. The catalysed reaction is 4-(phosphooxy)-L-threonine + NAD(+) = 3-amino-2-oxopropyl phosphate + CO2 + NADH. It functions in the pathway cofactor biosynthesis; pyridoxine 5'-phosphate biosynthesis; pyridoxine 5'-phosphate from D-erythrose 4-phosphate: step 4/5. Its function is as follows. Catalyzes the NAD(P)-dependent oxidation of 4-(phosphooxy)-L-threonine (HTP) into 2-amino-3-oxo-4-(phosphooxy)butyric acid which spontaneously decarboxylates to form 3-amino-2-oxopropyl phosphate (AHAP). In Helicobacter pylori (strain J99 / ATCC 700824) (Campylobacter pylori J99), this protein is 4-hydroxythreonine-4-phosphate dehydrogenase.